Consider the following 319-residue polypeptide: RWD domain-containing protein 2B (319 aa).

The RWD domain maps to 41–165; that stretch reads AELDLLASMF…EWVREHASGY (125 aa). Ser275 is modified (phosphoserine).

In terms of tissue distribution, ubiquitous.

The chain is RWD domain-containing protein 2B (RWDD2B) from Homo sapiens (Human).